The sequence spans 88 residues: Putative septation protein SpoVG (88 aa).

It belongs to the SpoVG family.

Functionally, could be involved in septation. This Lachnospira eligens (strain ATCC 27750 / DSM 3376 / VPI C15-48 / C15-B4) (Eubacterium eligens) protein is Putative septation protein SpoVG.